Reading from the N-terminus, the 671-residue chain is Probable potassium transport system protein Kup 2 (671 aa).

Transmembrane regions (helical) follow at residues 12-32 (FAGLLIAIGIVYGDIGTSPLY), 56-76 (ISLILWTVTLLTTVKYVMIAL), 99-119 (WLVIPALIGGAALLADGTLTP), 139-159 (IPVPSQEVVIMITIIILVILF), 172-192 (AFGPIMLIWFTFLGVVGIANL), 218-238 (VGILILGSVFLATTGAEALYS), 251-271 (SWPYIFVCLSLNYLGQGAWIL), 296-316 (LFAIALATIAAIIASQALITG), 345-365 (IYIPLINKMICVVTVAIVFLF), 374-394 (AYGLAITVTMLMTTILLFEYL), 400-420 (PLYLRVIFLIAFAFIEGMFLI), and 429-449 (GGYVTVLIAGFILVIMYVWFY).

The protein belongs to the HAK/KUP transporter (TC 2.A.72) family.

It is found in the cell membrane. It catalyses the reaction K(+)(in) + H(+)(in) = K(+)(out) + H(+)(out). Functionally, transport of potassium into the cell. Likely operates as a K(+):H(+) symporter. This chain is Probable potassium transport system protein Kup 2, found in Lactobacillus acidophilus (strain ATCC 700396 / NCK56 / N2 / NCFM).